A 129-amino-acid polypeptide reads, in one-letter code: Transmembrane protein 105 (129 aa).

2 consecutive transmembrane segments (helical) span residues 23–43 and 94–114; these read AGNV…TAWL and FLAG…CGVV.

Its subcellular location is the membrane. This Homo sapiens (Human) protein is Transmembrane protein 105 (TMEM105).